A 137-amino-acid polypeptide reads, in one-letter code: uncharacterized protein (137 aa).

Residues 4 to 21 traverse the membrane as a helical segment; the sequence is ISWQIVLAVIGVVAGFII.

It localises to the membrane. This is an uncharacterized protein from Archaeoglobus fulgidus (strain ATCC 49558 / DSM 4304 / JCM 9628 / NBRC 100126 / VC-16).